The primary structure comprises 538 residues: MAATGTEKQGAKAYYVSTPIYYVNDAPHLGHAYTTVAGDVLTRWHRQRGEKVWYLTGTDEHGQKIMRTAEANGVTPQAWADKLVTESWKPLWEHLDIANDDFIRTTQKRHTDRVQEFVQDLYDKGEIYKGGYEGPYCVGCEEYKLPGELLDGEGEYAGQKLCPIHKKPVEILSEENYFFKLSEYSEKLLAHYEANPGFVQPESARNEVVNFVRQGLQDLSISRSTFDWGVPVPWDDKHVIYVWVDALLNYATAVGYNENPEKFESTFPADVHLVGKDILRFHAIIWPAMLMAQGLPLPGKIAANGWLMVGGEKMSKSNLTGIKPQDLTTHFGVDAYRWYFLRAIAFGQDGSFSWEDFSARYTSELANDYGNLASRVAAMVGKYFGGELPAATADGDAEQAIHDGLTKAVAEADRKIGEELDFQGGILAVFDFVKQVNGYITEQEPWKVAKDDSPEGKARLATILYTAAEALRAVAVLLNPIMPDTSQKLWDSLGAEPSLGALADQHVQDAADWGRLPAGATVTKGAVLFPRLEEKPAA.

Residues 21-31 carry the 'HIGH' region motif; that stretch reads YYVNDAPHLGH. Zn(2+) is bound by residues Cys137, Cys140, Cys162, and His165. The 'KMSKS' region motif lies at 313–317; sequence KMSKS. Residue Lys316 participates in ATP binding.

It belongs to the class-I aminoacyl-tRNA synthetase family. MetG type 2A subfamily. As to quaternary structure, monomer. The cofactor is Zn(2+).

The protein resides in the cytoplasm. The catalysed reaction is tRNA(Met) + L-methionine + ATP = L-methionyl-tRNA(Met) + AMP + diphosphate. Is required not only for elongation of protein synthesis but also for the initiation of all mRNA translation through initiator tRNA(fMet) aminoacylation. The chain is Methionine--tRNA ligase from Streptomyces coelicolor (strain ATCC BAA-471 / A3(2) / M145).